The chain runs to 198 residues: Leucine-rich melanocyte differentiation-associated protein (198 aa).

4 LRR repeats span residues 2–22, 26–47, 48–69, and 75–95; these read EKYLSLSGNHSSNKRSLEGLS, SLEELILDNNQLGDDLVLPGLP, RLHTLTLNKNRITDLENLLDHL, and ALEYLSLLGNVACPNELVSLE. One can recognise an LRRCT domain in the interval 96–134; sequence KDEEDYKRYRCFVLYKLPNLKFLDAQKVTRQEREEALVR.

In terms of tissue distribution, in the embryo, expressed in melanoblasts. In the fetus, expressed in melanocytes. Not detected in retinal pigment epithelial cells.

In terms of biological role, required for melanocyte differentiation. The polypeptide is Leucine-rich melanocyte differentiation-associated protein (Homo sapiens (Human)).